The following is a 213-amino-acid chain: Ribosomal RNA small subunit methyltransferase G (213 aa).

S-adenosyl-L-methionine is bound by residues Gly75, Phe80, 128–129 (IE), and Arg144.

The protein belongs to the methyltransferase superfamily. RNA methyltransferase RsmG family.

The protein localises to the cytoplasm. It carries out the reaction guanosine(527) in 16S rRNA + S-adenosyl-L-methionine = N(7)-methylguanosine(527) in 16S rRNA + S-adenosyl-L-homocysteine. In terms of biological role, specifically methylates the N7 position of guanine in position 527 of 16S rRNA. The sequence is that of Ribosomal RNA small subunit methyltransferase G from Brucella suis biovar 1 (strain 1330).